The sequence spans 132 residues: Small ribosomal subunit protein uS8 (132 aa).

The protein belongs to the universal ribosomal protein uS8 family. As to quaternary structure, part of the 30S ribosomal subunit. Contacts proteins S5 and S12.

Functionally, one of the primary rRNA binding proteins, it binds directly to 16S rRNA central domain where it helps coordinate assembly of the platform of the 30S subunit. The chain is Small ribosomal subunit protein uS8 from Cereibacter sphaeroides (strain ATCC 17029 / ATH 2.4.9) (Rhodobacter sphaeroides).